Reading from the N-terminus, the 412-residue chain is Serine hydroxymethyltransferase (412 aa).

(6S)-5,6,7,8-tetrahydrofolate-binding positions include L117 and 121–123 (GHL). K226 is modified (N6-(pyridoxal phosphate)lysine). A (6S)-5,6,7,8-tetrahydrofolate-binding site is contributed by 349 to 351 (SPF).

It belongs to the SHMT family. As to quaternary structure, homodimer. The cofactor is pyridoxal 5'-phosphate.

The protein localises to the cytoplasm. It carries out the reaction (6R)-5,10-methylene-5,6,7,8-tetrahydrofolate + glycine + H2O = (6S)-5,6,7,8-tetrahydrofolate + L-serine. Its pathway is one-carbon metabolism; tetrahydrofolate interconversion. It participates in amino-acid biosynthesis; glycine biosynthesis; glycine from L-serine: step 1/1. Its function is as follows. Catalyzes the reversible interconversion of serine and glycine with tetrahydrofolate (THF) serving as the one-carbon carrier. This reaction serves as the major source of one-carbon groups required for the biosynthesis of purines, thymidylate, methionine, and other important biomolecules. Also exhibits THF-independent aldolase activity toward beta-hydroxyamino acids, producing glycine and aldehydes, via a retro-aldol mechanism. The chain is Serine hydroxymethyltransferase from Nitratidesulfovibrio vulgaris (strain DSM 19637 / Miyazaki F) (Desulfovibrio vulgaris).